The primary structure comprises 134 residues: Large ribosomal subunit protein eL14z (134 aa).

Belongs to the eukaryotic ribosomal protein eL14 family.

The protein is Large ribosomal subunit protein eL14z (RPL14A) of Arabidopsis thaliana (Mouse-ear cress).